Reading from the N-terminus, the 102-residue chain is Small ribosomal subunit protein uS10 (102 aa).

Belongs to the universal ribosomal protein uS10 family. Part of the 30S ribosomal subunit.

In terms of biological role, involved in the binding of tRNA to the ribosomes. The sequence is that of Small ribosomal subunit protein uS10 from Sulfolobus acidocaldarius (strain ATCC 33909 / DSM 639 / JCM 8929 / NBRC 15157 / NCIMB 11770).